The primary structure comprises 1483 residues: MASHKKSEDPLVVKDRQEQECESSDSTIASENASEHRSPMGLIDEDGIETLNRIASQSSRRRSSVYPPNVPTRTSTLATISENDPAVDPQGPSFDLNKWLKMVLRESERQGREAHRTGIVFKNFTVSGTGAALQLQDTVSSMLSAPFRIGEMMKNRHSPPKRILNEFNGLLKSGELLLVLGRPGSGCSTFLKSLCGELHGLSMSKESVIHYDGVPQQRMIKEFKGEVVYNQEVDKHFPHLTVGQTLEFAALARTPAQRIRDMSREEFAKHITQVVMAVFGLSHTYNTKVGNDFVRGVSGGERKRVSIAEMALAHSPLAAWDNSTRGLDSATALKFVEALRLFADLSGSAHAVAIYQASQSIYDIFNKVVVLYEGRQIYYGPAKDAKSYFERQGWECPQRQTTGDFLTSVTNPSERKARPGMENQVPRTAEDFEAYWRKSPEYQKLMSEISHYEQEHPLEEEGDALATFQQKKREIQAKHTRPQSPYLLSVPMQIKLNTKRAYQRVWNDISSTVSTVISQIIMALIIGSVFYGTPDATAGFTAKGATLFFAVLLNALIAMNEINSLYSQRPIVEKHNSYAFYHPATEAIAGVVSDIPVKFVIAVVFNLILYFLAGLHRSAGQFFLYLLVTFIVMFVMSAVFRTMAAITQTVSQAMGLAGILILALIVYTGFVLPVPSMHPWFEWIHYLNPIYYAFEMLIANEFHGRDFICSQFIPAYPNLSGNSFVCSSAGAKAGQRAISGDDYIQVNYQYSYGHVWRNFGILIAFLVGFMMIYFIATELNSSTSSTAEVLVFRRGHEPAYLRTDSKKPDAESAVELSAMKPTTESGEGDMSIIPPQKDIFTWRDVCYDIEIKGEPRRLLDHVSGWVKPGTLTALMGVSGAGKTTLLDVLAHRTSMGVITGDMFVNGRGLDQSFQRSTGYVQQQDLHLETATVRESLRFSALLRQPPNVSIQEKYDYVEDVIRMLKMEDFAEAVVGVPGQGLNVEQRKLLTIGVELAAKPKLLLFLDEPTSGLDSQSSWAICAFLRRLADSGQAVLCTIHQPSAILFQQFDQLLFLARGGKTVYFGPIGQNSNTLLNYFESNGARKCADDENPAEWMLEIVNAGTNSEGENWFDVWKRSSECQGVQTEIDRIHREQQSKTQASDKDNESWSKSEFAMPFWFQLYQVTYRVFQQYWRMPEYIASKWVLGILSGLFIGFSFFQAKSSLQGMQTIVYSLFMLCSIFSSLVQQVMPLFVTQRSLYEVRERPSKTYSWKAFLIANIIVEIPYQIMMGILTYACYYYAVVGVQDSERQGLVLLLCIQFFIYASTFAHMAIAAMPDTETASAIVVLLFAMSLTFCGVMQTPTALPGFWIFMYRVSPFTYWVSAMAATQLHDRVVQCSPSEMSIFDPPSGQTCGEYMSSFMSMAGGQLSNPNATSDCNYCSVAVADDFLSSVNIYWSERWRNFGLMWVYIVFNIFLATMLYYTFRVKKWNLSGLKERFSKKK.

Positions 1–19 (MASHKKSEDPLVVKDRQEQ) are enriched in basic and acidic residues. The disordered stretch occupies residues 1–92 (MASHKKSEDP…NDPAVDPQGP (92 aa)). Residue N32 is glycosylated (N-linked (GlcNAc...) asparagine). The span at 71–82 (PTRTSTLATISE) shows a compositional bias: polar residues. N-linked (GlcNAc...) asparagine glycosylation is found at N123 and N322. The 252-residue stretch at 147–398 (FRIGEMMKNR…FERQGWECPQ (252 aa)) folds into the ABC transporter 1 domain. 5 helical membrane passes run 512 to 532 (TVST…VFYG), 539 to 559 (GFTA…LIAM), 595 to 615 (IPVK…LAGL), 620 to 640 (GQFF…SAVF), and 654 to 674 (MGLA…VLPV). N-linked (GlcNAc...) asparagine glycosylation occurs at N718. A helical transmembrane segment spans residues 759–779 (FGILIAFLVGFMMIYFIATEL). N-linked (GlcNAc...) asparagine glycosylation is present at N780. The ABC transporter 2 domain maps to 840–1083 (FTWRDVCYDI…LLNYFESNGA (244 aa)). Residue 876–883 (GVSGAGKT) coordinates ATP. 2 N-linked (GlcNAc...) asparagine glycosylation sites follow: N947 and N1146. 5 helical membrane-spanning segments follow: residues 1179–1199 (YIAS…FSFF), 1215–1235 (LFML…LFVT), 1254–1274 (AFLI…GILT), 1293–1313 (LVLL…HMAI), and 1320–1340 (ETAS…CGVM). An N-linked (GlcNAc...) asparagine glycan is attached at N1413. Residues 1444-1464 (FGLMWVYIVFNIFLATMLYYT) form a helical membrane-spanning segment. A glycan (N-linked (GlcNAc...) asparagine) is linked at N1471.

The protein belongs to the ABC transporter superfamily. ABCG family. PDR (TC 3.A.1.205) subfamily.

It is found in the cell membrane. The catalysed reaction is (R)-miconazole(in) + ATP + H2O = (R)-miconazole(out) + ADP + phosphate + H(+). In terms of biological role, pleiotropic ABC efflux transporter involved in the basal level of azole susceptibility. Confers resistance to miconazole and clotrimazole. The sequence is that of ABC multidrug transporter atrA from Aspergillus oryzae (strain ATCC 42149 / RIB 40) (Yellow koji mold).